The following is a 1118-amino-acid chain: MAAAVGRDTLPEHWSYGVCRDGRVFFINDQLRCTTWLHPRTGEPVNSGHMIRSDLPRGWEEGFTEEGASFFIDHNQQTTTFRHPVTGQFSSENSEYVLREEPHPHMSKPERNQRPSSMVSETSTAGTTSTLEAKPGPKIVKSSSKVHSFGKRDQAIRRNLNVPVVVRGWLHKQDSSGMRLWKRRWFVLADYCLFYYKDSREEAVLGSIPLPSYVISPVAPEDRISRKYSFKAVHTGMRALIYSTTTAGSQMEHSGMRTYYFSADTLEDMNAWVRAMNQAAQVLSRSSLRRDVDKVERQAMPQANHTDACQECGHVGPGHSRDCPRRGYEDSYGFNRREQEEERFRAQRDPLEGRRDRSKARSPYLPAEEDALFVDLPGGPRGQQAQPQRAEKNGVPPYGLGEQNGTNGYQRTAPPRANPEKHSQRKTGLAQAEHWTKAQKGDGRSLPLDQTLPRQGPSQPLSFPENYQSLPKSTRHLSGSSSPPPRNLPSDYKYAQDRASHLKMSSEERRAHRDGTVWQLYEWQQRQQFRHGSPTAPIGAGSPEFTEQGRSRSLLEVPRSISVPPSPSDIPPPGPPRPFPPRRPHTPAERVTVKPPEQRRSVDISLGGSPRKARGHAAKNSSHVDRRSMPSMGYMTHTVSAPSLHGKSADDTYLQLKKDLEYLDLKMTGRDLLKDRSLKPMKIAESDIDVKLSIFCEQDRILQDLEDKIRALKENKDQLESVLEVLHRQTEQYRDQPQHLEKITCQQRLLQEDLVHIRAELCRESTEMENAWNEYLKLEKDVEQLKQTLQEQHRRAFFFQEKSQIQKDLWRIEDVMAGLSANKENYRVLVGSVKNPERKTVPLFPHPSVPSLSPTESKPALQPSPPTSPVRTPLEVRLFPQLQTYVPYRPHPPQLRKVMSPLQSPTKAKPQAEDEAPPRPPLPELYSPEDQPPAVPPLPREATIIRHTSVRGLKRQSDERKRDREQGQCVNGDLKVELRSYVSEPELASLSGDVPQPSLSLVGSESRYQTLPGRGLSGSTSRLQQSSTIAPYVTLRRGLNAENSSATFSRPKSALERLYSGDHQRGKMSAEEQLERMKRHQKALVRERKRTLSQGEKTGLLSARYLSQPLPGDLGSVC.

WW domains are found at residues 8–41 (DTLPEHWSYGVCRDGRVFFINDQLRCTTWLHPRT) and 53–86 (SDLPRGWEEGFTEEGASFFIDHNQQTTTFRHPVT). Residues 100-113 (EEPHPHMSKPERNQ) are compositionally biased toward basic and acidic residues. Residues 100-145 (EEPHPHMSKPERNQRPSSMVSETSTAGTTSTLEAKPGPKIVKSSSK) form a disordered region. Over residues 114-131 (RPSSMVSETSTAGTTSTL) the composition is skewed to polar residues. Residues 163 to 281 (PVVVRGWLHK…WVRAMNQAAQ (119 aa)) enclose the PH domain. Basic and acidic residues-rich tracts occupy residues 334–355 (FNRREQEEERFRAQRDPLEGRR) and 434–443 (HWTKAQKGDG). Disordered regions lie at residues 334-512 (FNRR…RRAH) and 528-629 (QFRH…RRSM). Residues 452–481 (LPRQGPSQPLSFPENYQSLPKSTRHLSGSS) show a composition bias toward polar residues. Residues 494–512 (YAQDRASHLKMSSEERRAH) are compositionally biased toward basic and acidic residues. A phosphoserine mark is found at serine 533, serine 542, serine 566, serine 601, serine 605, and serine 609. Residues 535-693 (TAPIGAGSPE…AESDIDVKLS (159 aa)) are interaction with CTNND1. Pro residues predominate over residues 564 to 579 (PPSPSDIPPPGPPRPF). A compositionally biased stretch (basic and acidic residues) spans 586–602 (TPAERVTVKPPEQRRSV). Positions 697–798 (EQDRILQDLE…LQEQHRRAFF (102 aa)) form a coiled coil. Disordered regions lie at residues 839–873 (KTVPLFPHPSVPSLSPTESKPALQPSPPTSPVRTP) and 886–968 (VPYR…EQGQ). Phosphoserine is present on residues serine 857 and serine 864. Threonine 867 is modified (phosphothreonine). A phosphoserine mark is found at serine 868, serine 900, and serine 904. The span at 930-939 (DQPPAVPPLP) shows a compositional bias: pro residues. Residues 955-966 (RQSDERKRDREQ) show a composition bias toward basic and acidic residues. Phosphoserine is present on residues serine 983 and leucine 990. A disordered region spans residues 1003–1024 (GSESRYQTLPGRGLSGSTSRLQ). A coiled-coil region spans residues 1064–1091 (QRGKMSAEEQLERMKRHQKALVRERKRT).

In terms of assembly, interacts with CAMSAP3 and CTNND1. Interacts (via WW domains) with TSPAN33 (via cytoplasmic domain) and with PDZD11; the interaction with TSPAN33 is dependent on PDZD11 being bound to PLEKHA7 and facilitates the docking of ADAM10 to zonula adherens through interaction of TSPAN33 with ADAM10. Expressed in kidney and lung (at protein level).

The protein resides in the cell junction. The protein localises to the adherens junction. Its subcellular location is the cytoplasm. It localises to the cytoskeleton. It is found in the microtubule organizing center. The protein resides in the centrosome. Required for zonula adherens biogenesis and maintenance. Acts via its interaction with CAMSAP3, which anchors microtubules at their minus-ends to zonula adherens, leading to the recruitment of KIFC3 kinesin to the junctional site. Mediates docking of ADAM10 to zonula adherens through a PDZD11-dependent interaction with the ADAM10-binding protein TSPAN33. This Mus musculus (Mouse) protein is Pleckstrin homology domain-containing family A member 7 (Plekha7).